Here is a 572-residue protein sequence, read N- to C-terminus: DNA polymerase (572 aa).

Residues M1–A222 form a 3'-5' exonuclease and strand displacement activities region. The interval Y56–F66 is interaction with the primer terminal protein. Mg(2+) contacts are provided by D142 and D166. The interval Y223–G226 is DNA-binding; Involved in the formation of a stable complex between TP and phi29 DNA polymerase. Residues F227–K572 are initiation, polymerization and pyrophosphorolytic activities. Mg(2+) contacts are provided by D246 and V247. Residues Y251, K368, and K380 each contribute to the 5-methyl-UTP site. Mg(2+) is bound by residues D453 and D455. D455 contacts 5-methyl-UTP.

It belongs to the DNA polymerase type-B family. As to quaternary structure, interacts with the primer terminal protein; this interaction allows the initiation of TP-primed DNA replication at both viral DNA ends. Interacts with DNA. Mg(2+) is required as a cofactor.

The enzyme catalyses DNA(n) + a 2'-deoxyribonucleoside 5'-triphosphate = DNA(n+1) + diphosphate. In terms of biological role, polymerase responsible for protein-primed viral DNA replication by strand displacement with high processivity and fidelity. To start replication, the DNA polymerase forms a heterodimer with a free primer terminal protein (TP), recognizes the replication origins at both 5' ends of the linear chromosome, and initiates replication using as primer the OH-group of Ser-232 of the TP. This polymerase possesses three enzymatic activities: DNA synthesis (polymerase), primer terminal protein (TP) deoxynucleotidylation, which is the formation of a covalent linkage (phosphoester) between the hydroxyl group of a specific serine residue in TP and 5'-dAMP, a reaction directed by the third T at the 3' end, and 3' to 5' exonuclease activity. Exonuclease activity has a proofreading purpose. Since the polymerase initiates the replication on the third thymine, the TP-dAMP initiation product translocates backwards to recover the template information of the 2 terminal nucleotide (sliding back-mechanism). The sequence is that of DNA polymerase from Bacillus phage Nf (Bacteriophage Nf).